The following is a 228-amino-acid chain: HTH-type transcriptional regulator TfdT (228 aa).

Positions 1-58 (MEIRQLKYFVAVAEAGGFGTAAQRMHISQPPLTRQIQALERDIGAKLFERTARGVELT) constitute an HTH lysR-type domain. The H-T-H motif DNA-binding region spans 18–37 (FGTAAQRMHISQPPLTRQIQ).

It belongs to the LysR transcriptional regulatory family.

The protein resides in the cytoplasm. Its function is as follows. Does not seem to be involved in the regulation of 3-chlorocatechol degradation. Does not activate the expression of its presumed target operon, tfdCDEF. In Cupriavidus pinatubonensis (strain JMP 134 / LMG 1197) (Cupriavidus necator (strain JMP 134)), this protein is HTH-type transcriptional regulator TfdT (tfdT).